A 454-amino-acid polypeptide reads, in one-letter code: MNNMHSQTTIAAIATPPGRGGVGVIRLSGPKAYDIAQKLTQKNLPEARMAGFRKFYDTDGSIMDEGIVLCFPNPHSFTGEDVVELQGHGGPVIQNALLGRLFELGAIAAKAGEFSMRAFENGKMDLVQAEAIADLIDATSQAAARSAVRSLQGAFSTKINTVLEKLIHLRLHVEAAIDFPEEEIDFLADGKILALLEDVQQSVHAVQTSARQGQLLREGLQVVIAGKPNAGKSSLLNALAGVERAIVTDIAGTTRDVLHEKISLNGLPITLTDTAGLRETGDIVEKEGIRRAIKEIEQADLLLLVYDLNQGDDPLKLAQEYFSEHIEPRRLMLIGNKCDLTGQSAEISDYQGFRHITVSAKQEMGVQGLVDAITAHAGFHPEEDTFIARTRHLDAMKRTQLYLAEAREQLVIFNAGELVAESLRLAQNALGEITGDFSADDLLGKIFGSFCIGK.

3 residues coordinate (6S)-5-formyl-5,6,7,8-tetrahydrofolate: R26, E84, and K123. A TrmE-type G domain is found at 219–378 (GLQVVIAGKP…LVDAITAHAG (160 aa)). K(+) is bound at residue N229. Residues 229–234 (NAGKSS), 248–254 (TDIAGTT), and 273–276 (DTAG) each bind GTP. S233 provides a ligand contact to Mg(2+). Residues T248, I250, and T253 each contribute to the K(+) site. T254 serves as a coordination point for Mg(2+). K454 is a binding site for (6S)-5-formyl-5,6,7,8-tetrahydrofolate.

Belongs to the TRAFAC class TrmE-Era-EngA-EngB-Septin-like GTPase superfamily. TrmE GTPase family. As to quaternary structure, homodimer. Heterotetramer of two MnmE and two MnmG subunits. Requires K(+) as cofactor.

The protein resides in the cytoplasm. Exhibits a very high intrinsic GTPase hydrolysis rate. Involved in the addition of a carboxymethylaminomethyl (cmnm) group at the wobble position (U34) of certain tRNAs, forming tRNA-cmnm(5)s(2)U34. The chain is tRNA modification GTPase MnmE from Acinetobacter baumannii (strain AYE).